A 105-amino-acid chain; its full sequence is Large ribosomal subunit protein bL21 (105 aa).

It belongs to the bacterial ribosomal protein bL21 family. Part of the 50S ribosomal subunit. Contacts protein L20.

Functionally, this protein binds to 23S rRNA in the presence of protein L20. The chain is Large ribosomal subunit protein bL21 from Phocaeicola vulgatus (strain ATCC 8482 / DSM 1447 / JCM 5826 / CCUG 4940 / NBRC 14291 / NCTC 11154) (Bacteroides vulgatus).